Reading from the N-terminus, the 156-residue chain is Small ribosomal subunit protein uS7 (156 aa).

This sequence belongs to the universal ribosomal protein uS7 family. In terms of assembly, part of the 30S ribosomal subunit. Contacts proteins S9 and S11.

In terms of biological role, one of the primary rRNA binding proteins, it binds directly to 16S rRNA where it nucleates assembly of the head domain of the 30S subunit. Is located at the subunit interface close to the decoding center, probably blocks exit of the E-site tRNA. The chain is Small ribosomal subunit protein uS7 from Shewanella piezotolerans (strain WP3 / JCM 13877).